The following is an 83-amino-acid chain: Large ribosomal subunit protein bL27 (83 aa).

The tract at residues Met1–Phe26 is disordered.

Belongs to the bacterial ribosomal protein bL27 family.

The chain is Large ribosomal subunit protein bL27 from Desulfosudis oleivorans (strain DSM 6200 / JCM 39069 / Hxd3) (Desulfococcus oleovorans).